The primary structure comprises 647 residues: Threonine--tRNA ligase (647 aa).

One can recognise a TGS domain in the interval 1 to 61 (MIKITFPDGA…EEDGSIEIVT (61 aa)). The interval 240-538 (DHRKLGKELD…LIETYKGAFP (299 aa)) is catalytic. Zn(2+) contacts are provided by Cys334, His385, and His515.

Belongs to the class-II aminoacyl-tRNA synthetase family. As to quaternary structure, homodimer. Requires Zn(2+) as cofactor.

The protein localises to the cytoplasm. It carries out the reaction tRNA(Thr) + L-threonine + ATP = L-threonyl-tRNA(Thr) + AMP + diphosphate + H(+). Catalyzes the attachment of threonine to tRNA(Thr) in a two-step reaction: L-threonine is first activated by ATP to form Thr-AMP and then transferred to the acceptor end of tRNA(Thr). Also edits incorrectly charged L-seryl-tRNA(Thr). This is Threonine--tRNA ligase from Streptococcus pyogenes serotype M1.